A 122-amino-acid polypeptide reads, in one-letter code: Glycine cleavage system H protein (122 aa).

Residues isoleucine 22–glutamate 103 enclose the Lipoyl-binding domain. Lysine 63 carries the post-translational modification N6-lipoyllysine.

It belongs to the GcvH family. The glycine cleavage system is composed of four proteins: P, T, L and H. (R)-lipoate is required as a cofactor.

Its function is as follows. The glycine cleavage system catalyzes the degradation of glycine. The H protein shuttles the methylamine group of glycine from the P protein to the T protein. This chain is Glycine cleavage system H protein, found in Treponema denticola (strain ATCC 35405 / DSM 14222 / CIP 103919 / JCM 8153 / KCTC 15104).